Here is a 171-residue protein sequence, read N- to C-terminus: Large ribosomal subunit protein uL10 (171 aa).

Belongs to the universal ribosomal protein uL10 family. Part of the ribosomal stalk of the 50S ribosomal subunit. The N-terminus interacts with L11 and the large rRNA to form the base of the stalk. The C-terminus forms an elongated spine to which L12 dimers bind in a sequential fashion forming a multimeric L10(L12)X complex.

Forms part of the ribosomal stalk, playing a central role in the interaction of the ribosome with GTP-bound translation factors. The sequence is that of Large ribosomal subunit protein uL10 from Erythrobacter litoralis (strain HTCC2594).